Consider the following 317-residue polypeptide: Sulfate adenylyltransferase subunit 2 (317 aa).

2 disordered regions span residues 1-21 (MPDS…APLD) and 298-317 (RAID…EGYF).

It belongs to the PAPS reductase family. CysD subfamily. As to quaternary structure, heterodimer composed of CysD, the smaller subunit, and CysN.

It carries out the reaction sulfate + ATP + H(+) = adenosine 5'-phosphosulfate + diphosphate. Its pathway is sulfur metabolism; hydrogen sulfide biosynthesis; sulfite from sulfate: step 1/3. Functionally, with CysN forms the ATP sulfurylase (ATPS) that catalyzes the adenylation of sulfate producing adenosine 5'-phosphosulfate (APS) and diphosphate, the first enzymatic step in sulfur assimilation pathway. APS synthesis involves the formation of a high-energy phosphoric-sulfuric acid anhydride bond driven by GTP hydrolysis by CysN coupled to ATP hydrolysis by CysD. The chain is Sulfate adenylyltransferase subunit 2 from Rhizobium johnstonii (strain DSM 114642 / LMG 32736 / 3841) (Rhizobium leguminosarum bv. viciae).